We begin with the raw amino-acid sequence, 115 residues long: Large ribosomal subunit protein bL20 (115 aa).

Belongs to the bacterial ribosomal protein bL20 family.

Binds directly to 23S ribosomal RNA and is necessary for the in vitro assembly process of the 50S ribosomal subunit. It is not involved in the protein synthesizing functions of that subunit. The sequence is that of Large ribosomal subunit protein bL20 (rplT) from Borreliella burgdorferi (strain ATCC 35210 / DSM 4680 / CIP 102532 / B31) (Borrelia burgdorferi).